The primary structure comprises 197 residues: Large ribosomal subunit protein uL13B (197 aa).

The residue at position 193 (serine 193) is a Phosphoserine.

This sequence belongs to the universal ribosomal protein uL13 family. Component of the large ribosomal subunit (LSU). Mature yeast ribosomes consist of a small (40S) and a large (60S) subunit. The 40S small subunit contains 1 molecule of ribosomal RNA (18S rRNA) and at least 33 different proteins. The large 60S subunit contains 3 rRNA molecules (25S, 5.8S and 5S rRNA) and at least 46 different proteins.

It localises to the cytoplasm. Its function is as follows. Component of the ribosome, a large ribonucleoprotein complex responsible for the synthesis of proteins in the cell. The small ribosomal subunit (SSU) binds messenger RNAs (mRNAs) and translates the encoded message by selecting cognate aminoacyl-transfer RNA (tRNA) molecules. The large subunit (LSU) contains the ribosomal catalytic site termed the peptidyl transferase center (PTC), which catalyzes the formation of peptide bonds, thereby polymerizing the amino acids delivered by tRNAs into a polypeptide chain. The nascent polypeptides leave the ribosome through a tunnel in the LSU and interact with protein factors that function in enzymatic processing, targeting, and the membrane insertion of nascent chains at the exit of the ribosomal tunnel. The protein is Large ribosomal subunit protein uL13B (rpl1601) of Schizosaccharomyces pombe (strain 972 / ATCC 24843) (Fission yeast).